The sequence spans 394 residues: RNA demethylase ALKBH5 (394 aa).

2 disordered regions span residues 1–26 (MAAASGYTDLREKLKSMTSRDNYKAG) and 48–83 (AEPYAAPGVKRKYPEDSDPERSDFEEQQLQKEEEAR). A2 carries the post-translational modification N-acetylalanine. A Glycyl lysine isopeptide (Lys-Gly) (interchain with G-Cter in ubiquitin) cross-link involves residue K57. The segment covering 59-83 (KYPEDSDPERSDFEEQQLQKEEEAR) has biased composition (basic and acidic residues). A phosphoserine mark is found at S64 and S69. Positions 67 to 116 (ERSDFEEQQLQKEEEARKVKSGIRQMRLFSQDECAKIEARIDEVVSRAEK) form a coiled coil. K86 participates in a covalent cross-link: Glycyl lysine isopeptide (Lys-Gly) (interchain with G-Cter in SUMO1). Phosphoserine is present on S87. K132 carries the N6-acetyllysine modification. Residue Y139 is part of the active site. The 2-oxoglutarate site is built by N193, Y195, and H204. Cysteines 230 and 267 form a disulfide. K235 carries the N6-acetyllysine modification. 2 residues coordinate 2-oxoglutarate: H266 and R277. Positions 298–394 (SSSVLPPSYA…PARKVKMRRH (97 aa)) are disordered. A Glycyl lysine isopeptide (Lys-Gly) (interchain with G-Cter in SUMO1) cross-link involves residue K321. S325 bears the Phosphoserine mark. K328 is covalently cross-linked (Glycyl lysine isopeptide (Lys-Gly) (interchain with G-Cter in SUMO2)). Over residues 328 to 349 (KADPDAAHRPRILEMDKEENRR) the composition is skewed to basic and acidic residues. Phosphoserine occurs at positions 371 and 384.

Belongs to the alkB family. In terms of assembly, monomer. Interacts with RBM33; promoting desumoylation by SENP1 and recruitment to N(6)-methyladenosine-containing mRNAs. Interacts (when acetylated by KAT8) with PSPC1; interaction facilitates recognition of N(6)-methyladenosine (m6A) mRNA. Fe(2+) is required as a cofactor. Phosphorylated at Ser-87 and Ser-325 in response to reactive oxygen species (ROS), promoting sumoylation and inactivation. In terms of processing, acetylated by KAT8 at Lys-235, promoting interaction with PSPC1, thereby facilitating recognition of N(6)-methyladenosine (m6A) mRNA by ALKBH5. Deacetylated at Lys-235 by HDAC7. Post-translationally, sumoylated at Lys-86 and Lys-321 by PIAS4 following phosphorylation at Ser-87 and Ser-325 in response to reactive oxygen species (ROS), inhibiting the RNA demethylase activity. Desumoylated by SENP1; relieving RNA demethylase inhibition, leading to N(6)-methyladenosine-containing mRNAs demethylation. Ubiquitinated at Lys-57 via 'Lys-48'-linked polyubiquitin chain, leading to its degradation by the proteasome. Deubiquitinated at Lys-57 by USP9X, promoting its stabilizazion.

The protein localises to the nucleus speckle. It catalyses the reaction an N(6)-methyladenosine in mRNA + 2-oxoglutarate + O2 = an adenosine in mRNA + formaldehyde + succinate + CO2. RNA demethylase activity is inhibited following sumoylation. Inhibition is relieved following desumoylation. In terms of biological role, dioxygenase that specifically demethylates N(6)-methyladenosine (m6A) RNA, the most prevalent internal modification of messenger RNA (mRNA) in higher eukaryotes. Demethylates RNA by oxidative demethylation, which requires molecular oxygen, alpha-ketoglutarate and iron. Demethylation of m6A mRNA affects mRNA processing, translation and export. Can also demethylate N(6)-methyladenosine in single-stranded DNA (in vitro). Required for the late meiotic and haploid phases of spermatogenesis by mediating m6A demethylation in spermatocytes and round spermatids: m6A demethylation of target transcripts is required for correct splicing and the production of longer 3'-UTR mRNAs in male germ cells. Involved in paraspeckle assembly, a nuclear membraneless organelle, by undergoing liquid-liquid phase separation. Paraspeckle assembly is coupled with m6A demethylation of RNAs, such as NEAT1 non-coding RNA. Also acts as a negative regulator of T-cell development: inhibits gamma-delta T-cell proliferation via demethylation of JAG1 and NOTCH2 transcripts. Inhibits regulatory T-cell (Treg) recruitment by mediating demethylation and destabilization of CCL28 mRNAs. This is RNA demethylase ALKBH5 (ALKBH5) from Bos taurus (Bovine).